The primary structure comprises 138 residues: UPF0355 protein SSP2326 (138 aa).

Residues 115–138 (NVAFETNQTKSNSHYSEETNGPKS) are disordered. Polar residues predominate over residues 118–138 (FETNQTKSNSHYSEETNGPKS).

The protein belongs to the UPF0355 family.

The sequence is that of UPF0355 protein SSP2326 from Staphylococcus saprophyticus subsp. saprophyticus (strain ATCC 15305 / DSM 20229 / NCIMB 8711 / NCTC 7292 / S-41).